The primary structure comprises 372 residues: Chaperone protein DnaJ (372 aa).

Positions 5 to 69 constitute a J domain; that stretch reads DYYEVLGLTK…QKKARYDQFG (65 aa). The segment at 129-211 adopts a CR-type zinc-finger fold; it reads GKETEIEIPK…CRGEGKVQKR (83 aa). Residues C142, C145, C159, C162, C185, C188, C199, and C202 each coordinate Zn(2+). CXXCXGXG motif repeat units lie at residues 142–149, 159–166, 185–192, and 199–206; these read CETCHGSG, CSTCNGAG, CTTCHGTG, and CSTCRGEG.

The protein belongs to the DnaJ family. As to quaternary structure, homodimer. Zn(2+) is required as a cofactor.

It localises to the cytoplasm. Functionally, participates actively in the response to hyperosmotic and heat shock by preventing the aggregation of stress-denatured proteins and by disaggregating proteins, also in an autonomous, DnaK-independent fashion. Unfolded proteins bind initially to DnaJ; upon interaction with the DnaJ-bound protein, DnaK hydrolyzes its bound ATP, resulting in the formation of a stable complex. GrpE releases ADP from DnaK; ATP binding to DnaK triggers the release of the substrate protein, thus completing the reaction cycle. Several rounds of ATP-dependent interactions between DnaJ, DnaK and GrpE are required for fully efficient folding. Also involved, together with DnaK and GrpE, in the DNA replication of plasmids through activation of initiation proteins. This Lysinibacillus sphaericus (strain C3-41) protein is Chaperone protein DnaJ.